Reading from the N-terminus, the 351-residue chain is Transcription elongation factor A N-terminal and central domain-containing protein (351 aa).

The TFIIS N-terminal domain maps to 5–82 (NQIAARASLI…SKWKAVYKQT (78 aa)). Disordered stretches follow at residues 86–119 (ARNSPKLFPVRGNKEENSGPSHDPSQNETLGICS) and 144–169 (LKPKEEHFGDGDPESTGKRSSELLDP). The segment covering 103–119 (SGPSHDPSQNETLGICS) has biased composition (polar residues). Positions 145–165 (KPKEEHFGDGDPESTGKRSSE) are enriched in basic and acidic residues. In terms of domain architecture, TFIIS central spans 173–289 (MRTKCIELLY…EHYLPQVIDG (117 aa)).

This Homo sapiens (Human) protein is Transcription elongation factor A N-terminal and central domain-containing protein (TCEANC).